The sequence spans 162 residues: Small ribosomal subunit protein uS9 (162 aa).

It belongs to the universal ribosomal protein uS9 family.

In Methylobacterium sp. (strain 4-46), this protein is Small ribosomal subunit protein uS9.